The primary structure comprises 422 residues: Blood group Rh(D) polypeptide (422 aa).

A run of 12 helical transmembrane segments spans residues 13–33, 43–63, 76–96, 113–135, 137–159, 170–190, 215–235, 244–266, 272–292, 294–314, 335–355, and 372–392; these read LPLWAFGLQVTFILLFYFLIG, FMAIYQVIQDLTLVAALGFGF, VAFSFFMLALGVQGTILLDYF, FLSIQRATISTLPLLISAGAVLG, VNLVQLAVMVLVEAMTFGAIRVA, IIMMYGHVFGAYFGLTVAWWL, LFAMLGTLFLWIFWPSINSAL, AVFNTYYALAVSTVTATSMSALS, INMVHIHNAVLAGGVAVGAPS, LISSPWIAMVLGLTAGLISIW, YTFGLPGLLGALTYYCLHIIA, and VGALSFAMAMGMVTGLLTGCL.

It belongs to the ammonium transporter (TC 2.A.49) family. Rh subfamily. In terms of processing, palmitoylated.

Its subcellular location is the cell membrane. Its function is as follows. May be part of an oligomeric complex which is likely to have a transport or channel function in the erythrocyte membrane. This is Blood group Rh(D) polypeptide (Rhd) from Rattus norvegicus (Rat).